The chain runs to 326 residues: Putative ABC transporter ATP-binding protein MA_4020 (326 aa).

Positions 1 to 12 are enriched in polar residues; the sequence is MTISTLSSSYGN. Residues 1 to 34 are disordered; it reads MTISTLSSSYGNAQDVPAEDSDRHGSIEPGSEKA. Residues 46–281 enclose the ABC transporter domain; the sequence is LEVKNLCHRY…PELLRKAHLR (236 aa). 80 to 87 is an ATP binding site; the sequence is GANGAGKS.

Belongs to the ABC transporter superfamily.

It localises to the cell membrane. Functionally, probably part of an ABC transporter complex. Responsible for energy coupling to the transport system. The chain is Putative ABC transporter ATP-binding protein MA_4020 from Methanosarcina acetivorans (strain ATCC 35395 / DSM 2834 / JCM 12185 / C2A).